Here is a 307-residue protein sequence, read N- to C-terminus: Plasmodesmata-located protein 2 (307 aa).

Positions 1–23 (MGLSISFLSIIMMMCLLFPDLNV) are cleaved as a signal peptide. At 24–275 (VVKSATTEYT…STSTGATGKT (252 aa)) the chain is on the extracellular side. Gnk2-homologous domains follow at residues 33 to 136 (TTLI…VSGF) and 141 to 240 (GMEM…YYPN). 6 disulfide bridges follow: Cys-40/Cys-114, Cys-90/Cys-99, Cys-102/Cys-127, Cys-149/Cys-218, Cys-194/Cys-203, and Cys-206/Cys-231. Residues 246–268 (SSSSSSSSSSSSSGSSNSDPSTS) are compositionally biased toward low complexity. Residues 246 to 270 (SSSSSSSSSSSSSGSSNSDPSTSTG) form a disordered region. The chain crosses the membrane as a helical span at residues 276–296 (VAIIVGGAAGVGFLVICLLFA). A necessary and sufficient for plasmodesmal targeting region spans residues 276–296 (VAIIVGGAAGVGFLVICLLFA). Topologically, residues 297-307 (KNLMRKKHDDY) are cytoplasmic.

It belongs to the cysteine-rich repeat secretory protein family. Plasmodesmata-located proteins (PDLD) subfamily. (Microbial infection) Interacts with Grapevine fanleaf virus (GFLV) 2B-MP. In terms of tissue distribution, highly expressed in inflorescence shoot apex. Uniformly expressed within the inflorescence meristem with the exception of a boundary zone between floral primordia and the meristem where the expression is weaker (at protein level).

Its subcellular location is the cell membrane. It localises to the cell junction. The protein resides in the plasmodesma. Functionally, modulates cell-to-cell trafficking. This Arabidopsis thaliana (Mouse-ear cress) protein is Plasmodesmata-located protein 2.